We begin with the raw amino-acid sequence, 50 residues long: uncharacterized protein (50 aa).

Residues 5 to 19 form a helical membrane-spanning segment; sequence IIIIVIVIIIFFFYL. Positions 19-50 form a coiled coil; the sequence is LKQKKLTNCETQVVKVQKDIDEINLKLKKLNK.

It is found in the membrane. This is an uncharacterized protein from Acheta domesticus (House cricket).